Consider the following 428-residue polypeptide: Adenylosuccinate synthetase (428 aa).

Residues 12–18 and 40–42 each bind GTP; these read GDEGKGK and GHT. The Proton acceptor role is filled by D13. The Mg(2+) site is built by D13 and G40. IMP is bound by residues 13–16, 38–41, T128, R142, Q223, T238, and R302; these read DEGK and NAGH. Catalysis depends on H41, which acts as the Proton donor. 298 to 304 contacts substrate; sequence VTTGRPR. Residues R304, 330-332, and 413-415 contribute to the GTP site; these read KLD and GVG.

This sequence belongs to the adenylosuccinate synthetase family. Homodimer. Requires Mg(2+) as cofactor.

It is found in the cytoplasm. It catalyses the reaction IMP + L-aspartate + GTP = N(6)-(1,2-dicarboxyethyl)-AMP + GDP + phosphate + 2 H(+). The protein operates within purine metabolism; AMP biosynthesis via de novo pathway; AMP from IMP: step 1/2. Its function is as follows. Plays an important role in the de novo pathway of purine nucleotide biosynthesis. Catalyzes the first committed step in the biosynthesis of AMP from IMP. The sequence is that of Adenylosuccinate synthetase from Acidothermus cellulolyticus (strain ATCC 43068 / DSM 8971 / 11B).